The following is a 447-amino-acid chain: Putative branched-chain amino acid carrier protein SAB1263c (447 aa).

Transmembrane regions (helical) follow at residues 6–26, 40–60, 74–94, 114–134, 143–163, 193–213, 229–249, 290–310, 326–346, 350–370, 382–402, and 417–437; these read WVIG…IFPP, ILAF…VGAL, PKFS…LFAI, SSIA…YICL, IGSL…IKGY, GYLT…VNAV, LTAG…LGYI, LLGI…IGAV, FVLV…NAVI, IPVL…ILIA, IPVI…LGWL, and LEWF…GIFV.

This sequence belongs to the branched chain amino acid transporter family.

Its subcellular location is the cell membrane. In terms of biological role, component of the transport system for branched-chain amino acids (leucine, isoleucine and valine), which is coupled to a proton motive force (Potential). Contributes to NaCl tolerance. The sequence is that of Putative branched-chain amino acid carrier protein SAB1263c from Staphylococcus aureus (strain bovine RF122 / ET3-1).